A 550-amino-acid chain; its full sequence is Membrane-bound alkaline phosphatase (550 aa).

A signal peptide spans 1-39 (MSTWWLVVVAAAAAAGLVRAEDRYHPERLAAGEASAATR). Mg(2+) is bound at residue D83. D83 contributes to the Zn(2+) binding site. S133 serves as the catalytic Phosphoserine intermediate. The Mg(2+) site is built by H196, S198, and E356. The Zn(2+) site is built by D361, H365, D402, H403, and H479. S524 carries GPI-anchor amidated serine lipidation. Positions 525–550 (AATVPTAALLSLLLAAFITLRHQCFL) are cleaved as a propeptide — removed in mature form.

The protein belongs to the alkaline phosphatase family. The cofactor is Mg(2+). Requires Zn(2+) as cofactor. Midgut.

Its subcellular location is the cell membrane. The catalysed reaction is a phosphate monoester + H2O = an alcohol + phosphate. The sequence is that of Membrane-bound alkaline phosphatase (Alp-m) from Bombyx mori (Silk moth).